We begin with the raw amino-acid sequence, 274 residues long: Eukaryotic translation initiation factor 3 subunit G (274 aa).

The 79-residue stretch at 192-270 (TAIRISNLSN…LILNVEWSKP (79 aa)) folds into the RRM domain.

The protein belongs to the eIF-3 subunit G family. Component of the eukaryotic translation initiation factor 3 (eIF-3) complex.

It localises to the cytoplasm. RNA-binding component of the eukaryotic translation initiation factor 3 (eIF-3) complex, which is involved in protein synthesis of a specialized repertoire of mRNAs and, together with other initiation factors, stimulates binding of mRNA and methionyl-tRNAi to the 40S ribosome. The eIF-3 complex specifically targets and initiates translation of a subset of mRNAs involved in cell proliferation. This subunit can bind 18S rRNA. The polypeptide is Eukaryotic translation initiation factor 3 subunit G (Bombyx mori (Silk moth)).